Reading from the N-terminus, the 101-residue chain is Small ribosomal subunit protein uS14 (101 aa).

This sequence belongs to the universal ribosomal protein uS14 family. Part of the 30S ribosomal subunit. Contacts proteins S3 and S10.

Binds 16S rRNA, required for the assembly of 30S particles and may also be responsible for determining the conformation of the 16S rRNA at the A site. The chain is Small ribosomal subunit protein uS14 from Cupriavidus necator (strain ATCC 17699 / DSM 428 / KCTC 22496 / NCIMB 10442 / H16 / Stanier 337) (Ralstonia eutropha).